Here is an 880-residue protein sequence, read N- to C-terminus: Interference hedgehog (880 aa).

The signal sequence occupies residues 1–20; the sequence is MTLLTSSLLLFSLLTSRLEA. At 21-703 the chain is on the extracellular side; sequence IPVLEKSPAH…ETFNMSPMLT (683 aa). Ig-like C2-type domains are found at residues 45-142, 132-232, 252-340, and 346-432; these read PGVR…TARL, PLVV…ERIQ, PHLL…YIKV, and PQIV…LQVN. 4 cysteine pairs are disulfide-bonded: Cys-68–Cys-126, Cys-173–Cys-220, Cys-276–Cys-324, and Cys-367–Cys-414. 2 N-linked (GlcNAc...) asparagine glycosylation sites follow: Asn-102 and Asn-209. A disordered region spans residues 426 to 467; it reads GTLLQVNPKQIQEPRESGGTHRPKPNQGSKQKQMYPPTPPNV. Fibronectin type-III domains follow at residues 461–567 and 575–670; these read PPTP…LQPG and VPEL…TQRP. Asn-466 is a glycosylation site (N-linked (GlcNAc...) asparagine). Residues Arg-497, Lys-501, Lys-503, and Arg-541 each contribute to the heparin site. Asn-557 is a glycosylation site (N-linked (GlcNAc...) asparagine). A disordered region spans residues 662 to 697; sequence LKQGRTQRPKTSTTEEPTLQMGDRDTTTPSHNETFN. Polar residues-rich tracts occupy residues 665 to 678 and 688 to 697; these read GRTQRPKTSTTEEP and TTPSHNETFN. N-linked (GlcNAc...) asparagine glycosylation occurs at Asn-693. A helical membrane pass occupies residues 704–724; it reads GTIGGGAVLILLLISTCLCVC. The Cytoplasmic segment spans residues 725 to 880; the sequence is RRRTSRSRGN…SSGSLNSVGV (156 aa). Disordered stretches follow at residues 728–762 and 775–880; these read TSRSRGNNPNKPRMAELRDDFVPLGNCSPTKQRQR and QQQQ…SVGV. 2 stretches are compositionally biased toward low complexity: residues 823 to 837 and 864 to 880; these read RAGGSNGSNNGNNNN and SSRSENLSSGSLNSVGV.

Belongs to the immunoglobulin superfamily. IHOG family. In terms of assembly, homodimer. Heterotetramer; 2 iHog chains bind 2 hh chains when facilitated by heparin, heparin is required to promote high-affinity interactions between hh and iHog.

It is found in the membrane. In terms of biological role, mediates response to the active Hedgehog (Hh) protein signal in embryos, functioning upstream or at the level of patched (ptc). The sequence is that of Interference hedgehog from Drosophila sechellia (Fruit fly).